The chain runs to 199 residues: Inner membrane protein E199L (199 aa).

Asn-131 carries N-linked (GlcNAc...) asparagine; by host glycosylation. The chain crosses the membrane as a helical span at residues 150–170 (INVMNHPFLTLILIILILVII).

This sequence belongs to the asfivirus E199L family. As to quaternary structure, interacts with host PYCR2; this interaction results in autophagy activation. Post-translationally, contains intramolecular disulfide bonds.

It localises to the virion membrane. It is found in the host membrane. Functionally, essential for viral fusion with host endosomal membrane and core release. Not required for virus morphogenesis and egress. Induces complete autophagy through the interaction with and down-regulation of host PYCR2. This is Inner membrane protein E199L from African swine fever virus (isolate Tick/Malawi/Lil 20-1/1983) (ASFV).